Here is a 365-residue protein sequence, read N- to C-terminus: Uroporphyrinogen decarboxylase (365 aa).

Residues 27-31 (RQAGR), Asp77, Tyr154, Ser209, and His327 contribute to the substrate site.

The protein belongs to the uroporphyrinogen decarboxylase family. Homodimer.

The protein localises to the cytoplasm. The enzyme catalyses uroporphyrinogen III + 4 H(+) = coproporphyrinogen III + 4 CO2. Its pathway is porphyrin-containing compound metabolism; protoporphyrin-IX biosynthesis; coproporphyrinogen-III from 5-aminolevulinate: step 4/4. In terms of biological role, catalyzes the decarboxylation of four acetate groups of uroporphyrinogen-III to yield coproporphyrinogen-III. The sequence is that of Uroporphyrinogen decarboxylase from Alkalilimnicola ehrlichii (strain ATCC BAA-1101 / DSM 17681 / MLHE-1).